The chain runs to 132 residues: Small ribosomal subunit protein uS8 (132 aa).

It belongs to the universal ribosomal protein uS8 family. Part of the 30S ribosomal subunit. Contacts proteins S5 and S12.

Functionally, one of the primary rRNA binding proteins, it binds directly to 16S rRNA central domain where it helps coordinate assembly of the platform of the 30S subunit. The polypeptide is Small ribosomal subunit protein uS8 (Xylella fastidiosa (strain 9a5c)).